The sequence spans 435 residues: Tryptophan--tRNA ligase (435 aa).

ATP is bound by residues 10 to 12 and 18 to 19; these read TTS and GN. A 'HIGH' region motif is present at residues 11-19; that stretch reads TSGTPHLGN. Aspartate 143 serves as a coordination point for L-tryptophan. ATP is bound by residues 155-157, leucine 195, and 202-206; these read GRD and KMSKS. Residues 202 to 206 carry the 'KMSKS' region motif; the sequence is KMSKS.

This sequence belongs to the class-I aminoacyl-tRNA synthetase family. In terms of assembly, homodimer.

It is found in the cytoplasm. It carries out the reaction tRNA(Trp) + L-tryptophan + ATP = L-tryptophyl-tRNA(Trp) + AMP + diphosphate + H(+). Functionally, catalyzes the attachment of tryptophan to tRNA(Trp). The polypeptide is Tryptophan--tRNA ligase (Xylella fastidiosa (strain Temecula1 / ATCC 700964)).